Reading from the N-terminus, the 248-residue chain is Granzyme-like protein 2 (248 aa).

A signal peptide spans 1–18 (MFLFLIFLVAVLPVNTEG). Residues 19–20 (GE) constitute a propeptide, activation peptide. Residues 21 to 243 (IVWGTESKPH…FIPWIQKTMK (223 aa)) form the Peptidase S1 domain. The cysteines at positions 50 and 66 are disulfide-linked. Residues His65 and Asp108 each act as charge relay system in the active site. Intrachain disulfides connect Cys142–Cys207 and Cys172–Cys186. Residues Asn152 and Asn180 are each glycosylated (N-linked (GlcNAc...) asparagine). Ser201 serves as the catalytic Charge relay system.

Belongs to the peptidase S1 family. Granzyme subfamily. As to expression, duodenum, lung and spleen.

Its function is as follows. This enzyme is necessary for target cell lysis in cell-mediated immune responses. The chain is Granzyme-like protein 2 from Rattus norvegicus (Rat).